Consider the following 199-residue polypeptide: 7-methyl-GTP pyrophosphatase (199 aa).

The Proton acceptor role is filled by Asp-76.

This sequence belongs to the Maf family. YceF subfamily. A divalent metal cation is required as a cofactor.

The protein localises to the cytoplasm. It catalyses the reaction N(7)-methyl-GTP + H2O = N(7)-methyl-GMP + diphosphate + H(+). Its function is as follows. Nucleoside triphosphate pyrophosphatase that hydrolyzes 7-methyl-GTP (m(7)GTP). May have a dual role in cell division arrest and in preventing the incorporation of modified nucleotides into cellular nucleic acids. The polypeptide is 7-methyl-GTP pyrophosphatase (Rhizobium meliloti (strain 1021) (Ensifer meliloti)).